The sequence spans 200 residues: High frequency lysogenization protein HflD homolog (200 aa).

The protein belongs to the HflD family.

The protein localises to the cytoplasm. Its subcellular location is the cell inner membrane. The polypeptide is High frequency lysogenization protein HflD homolog (Pseudoalteromonas translucida (strain TAC 125)).